The sequence spans 227 residues: PKHD-type hydroxylase azo0608 (227 aa).

The region spanning 78–178 (RVLTPFFNRY…RVACFMFMQS (101 aa)) is the Fe2OG dioxygenase domain. Fe cation contacts are provided by H97, D99, and H159. Residue R169 coordinates 2-oxoglutarate.

The cofactor is Fe(2+). Requires L-ascorbate as cofactor.

This chain is PKHD-type hydroxylase azo0608, found in Azoarcus sp. (strain BH72).